Here is a 94-residue protein sequence, read N- to C-terminus: Co-chaperonin GroES (94 aa).

It belongs to the GroES chaperonin family. In terms of assembly, heptamer of 7 subunits arranged in a ring. Interacts with the chaperonin GroEL.

It localises to the cytoplasm. Functionally, together with the chaperonin GroEL, plays an essential role in assisting protein folding. The GroEL-GroES system forms a nano-cage that allows encapsulation of the non-native substrate proteins and provides a physical environment optimized to promote and accelerate protein folding. GroES binds to the apical surface of the GroEL ring, thereby capping the opening of the GroEL channel. This Leuconostoc citreum (strain KM20) protein is Co-chaperonin GroES.